The primary structure comprises 261 residues: Succinate dehydrogenase iron-sulfur subunit (261 aa).

Residues Met1–Glu23 are disordered. The 2Fe-2S ferredoxin-type domain occupies Arg28–Met119. 3 residues coordinate [2Fe-2S] cluster: Cys80, Cys85, and Cys100. A 4Fe-4S ferredoxin-type domain is found at Gly161–Tyr191. Residues Cys171, Cys174, and Cys177 each coordinate [4Fe-4S] cluster. Residue Cys181 coordinates [3Fe-4S] cluster. A ubiquinone is bound at residue Trp186. [3Fe-4S] cluster-binding residues include Cys228 and Cys234. Cys238 contributes to the [4Fe-4S] cluster binding site.

The protein belongs to the succinate dehydrogenase/fumarate reductase iron-sulfur protein family. Part of an enzyme complex containing four subunits: a flavoprotein, an iron-sulfur, cytochrome b-556, and a hydrophobic anchor protein. The cofactor is [2Fe-2S] cluster. Requires [3Fe-4S] cluster as cofactor. [4Fe-4S] cluster serves as cofactor.

The enzyme catalyses a quinone + succinate = fumarate + a quinol. The protein operates within carbohydrate metabolism; tricarboxylic acid cycle; fumarate from succinate (bacterial route): step 1/1. The protein is Succinate dehydrogenase iron-sulfur subunit (sdhB) of Rickettsia felis (strain ATCC VR-1525 / URRWXCal2) (Rickettsia azadi).